Here is a 64-residue protein sequence, read N- to C-terminus: Epidermal growth factor (64 aa).

An N-terminal signal peptide occupies residues 1–21; that stretch reads MMRHLLLVGAAILIFVSDAQA. Position 22 is a pyrrolidone carboxylic acid (Gln22). The 37-residue stretch at 25-61 folds into the EGF-like domain; it reads GEDPCQIVRCSYGANCIAYGDTAICECPFGYSGIRCQ. 3 cysteine pairs are disulfide-bonded: Cys29/Cys40, Cys34/Cys49, and Cys51/Cys60.

As to expression, albumen gland. Up-regulated in adult CNS after axotomy.

Its subcellular location is the secreted. Its function is as follows. Induces neurite outgrowth in specific adult neurons in vitro. The protein is Epidermal growth factor of Lymnaea stagnalis (Great pond snail).